The primary structure comprises 211 residues: Uracil phosphoribosyltransferase (211 aa).

5-phospho-alpha-D-ribose 1-diphosphate-binding positions include Arg77, Arg102, and 129 to 137; that span reads DPMLATGGS. Residues Ile192 and 197 to 199 contribute to the uracil site; that span reads GDA. 5-phospho-alpha-D-ribose 1-diphosphate is bound at residue Asp198.

This sequence belongs to the UPRTase family. Mg(2+) is required as a cofactor.

It carries out the reaction UMP + diphosphate = 5-phospho-alpha-D-ribose 1-diphosphate + uracil. The protein operates within pyrimidine metabolism; UMP biosynthesis via salvage pathway; UMP from uracil: step 1/1. With respect to regulation, allosterically activated by GTP. Functionally, catalyzes the conversion of uracil and 5-phospho-alpha-D-ribose 1-diphosphate (PRPP) to UMP and diphosphate. The sequence is that of Uracil phosphoribosyltransferase from Corynebacterium diphtheriae (strain ATCC 700971 / NCTC 13129 / Biotype gravis).